We begin with the raw amino-acid sequence, 90 residues long: MAVKIRLKRMGSKKAPFYRVVVADSRSPRDGRFIEEIGYYNPVAQPAVVKIDTDKAVQWILNGAAPTDTVRNLLSKEGVMAKVHETKYGK.

Belongs to the bacterial ribosomal protein bS16 family.

The chain is Small ribosomal subunit protein bS16 from Brevibacillus brevis (strain 47 / JCM 6285 / NBRC 100599).